Reading from the N-terminus, the 754-residue chain is 5-methyltetrahydropteroyltriglutamate--homocysteine methyltransferase (754 aa).

5-methyltetrahydropteroyltri-L-glutamate is bound by residues 17–20 (RELK) and lysine 117. Residues 431–433 (IGS) and glutamate 484 contribute to the L-homocysteine site. Residues 431–433 (IGS) and glutamate 484 each bind L-methionine. 5-methyltetrahydropteroyltri-L-glutamate contacts are provided by residues 515–516 (RC) and tryptophan 561. L-homocysteine is bound at residue aspartate 599. Aspartate 599 contacts L-methionine. 5-methyltetrahydropteroyltri-L-glutamate is bound at residue glutamate 605. Zn(2+) is bound by residues histidine 641, cysteine 643, and glutamate 665. The Proton donor role is filled by histidine 694. Zn(2+) is bound at residue cysteine 726.

Belongs to the vitamin-B12 independent methionine synthase family. Zn(2+) serves as cofactor.

The enzyme catalyses 5-methyltetrahydropteroyltri-L-glutamate + L-homocysteine = tetrahydropteroyltri-L-glutamate + L-methionine. The protein operates within amino-acid biosynthesis; L-methionine biosynthesis via de novo pathway; L-methionine from L-homocysteine (MetE route): step 1/1. Functionally, catalyzes the transfer of a methyl group from 5-methyltetrahydrofolate to homocysteine resulting in methionine formation. The sequence is that of 5-methyltetrahydropteroyltriglutamate--homocysteine methyltransferase from Salmonella arizonae (strain ATCC BAA-731 / CDC346-86 / RSK2980).